Consider the following 693-residue polypeptide: Phenoloxidase subunit 2 (693 aa).

Residues 1–51 (MADVFESLELLFDRPNEPLITPKGENNSVFQLTEQFLTEDYANNGIELNNR) constitute a propeptide that is removed on maturation. N-linked (GlcNAc...) asparagine glycosylation is found at N26 and N64. H213, H217, and H243 together coordinate Cu cation. E351 functions as the Proton acceptor in the catalytic mechanism. H366, H370, and H406 together coordinate Cu cation. N462 and N494 each carry an N-linked (GlcNAc...) asparagine glycan. 2 cysteine pairs are disulfide-bonded: C583/C627 and C585/C634. N-linked (GlcNAc...) asparagine glycosylation occurs at N680.

As to quaternary structure, heterodimer. It depends on Cu(2+) as a cofactor. In terms of processing, the N-terminus is blocked. As to expression, synthesized by hemocytes and released into the hemolymph plasma.

The protein resides in the secreted. It carries out the reaction 2 L-dopa + O2 = 2 L-dopaquinone + 2 H2O. The enzyme catalyses L-tyrosine + O2 = L-dopaquinone + H2O. Functionally, this is a copper-containing oxidase that functions in the formation of pigments such as melanins and other polyphenolic compounds. Catalyzes the rate-limiting conversions of tyrosine to DOPA, DOPA to DOPA-quinone and possibly 5,6 dihydroxyindole to indole-5'6 quinone. The polypeptide is Phenoloxidase subunit 2 (Bombyx mori (Silk moth)).